Consider the following 523-residue polypeptide: GMP synthase [glutamine-hydrolyzing] (523 aa).

In terms of domain architecture, Glutamine amidotransferase type-1 spans 9 to 198 (PVLVVDYGAQ…LTEIAGLEQN (190 aa)). The active-site Nucleophile is the cysteine 86. Residues histidine 172 and glutamate 174 contribute to the active site. The GMPS ATP-PPase domain occupies 199 to 397 (WTAANIAEEL…LGLPEVIVAR (199 aa)). 227–233 (SGGVDSA) serves as a coordination point for ATP.

In terms of assembly, homodimer.

The catalysed reaction is XMP + L-glutamine + ATP + H2O = GMP + L-glutamate + AMP + diphosphate + 2 H(+). It participates in purine metabolism; GMP biosynthesis; GMP from XMP (L-Gln route): step 1/1. Catalyzes the synthesis of GMP from XMP. This is GMP synthase [glutamine-hydrolyzing] from Corynebacterium efficiens (strain DSM 44549 / YS-314 / AJ 12310 / JCM 11189 / NBRC 100395).